The primary structure comprises 151 residues: Large ribosomal subunit protein uL15 (151 aa).

The tract at residues 1-60 is disordered; it reads MAENNPLKIHNLRPAPGAKTAKTRVGRGEASKGKTAGRGTKGTKARYQVPERFEGGQMPL.

This sequence belongs to the universal ribosomal protein uL15 family. Part of the 50S ribosomal subunit.

In terms of biological role, binds to the 23S rRNA. In Streptomyces coelicolor (strain ATCC BAA-471 / A3(2) / M145), this protein is Large ribosomal subunit protein uL15.